A 417-amino-acid chain; its full sequence is NADH-quinone oxidoreductase subunit D (417 aa).

Belongs to the complex I 49 kDa subunit family. In terms of assembly, NDH-1 is composed of 14 different subunits. Subunits NuoB, C, D, E, F, and G constitute the peripheral sector of the complex.

The protein resides in the cell inner membrane. It carries out the reaction a quinone + NADH + 5 H(+)(in) = a quinol + NAD(+) + 4 H(+)(out). Functionally, NDH-1 shuttles electrons from NADH, via FMN and iron-sulfur (Fe-S) centers, to quinones in the respiratory chain. The immediate electron acceptor for the enzyme in this species is believed to be ubiquinone. Couples the redox reaction to proton translocation (for every two electrons transferred, four hydrogen ions are translocated across the cytoplasmic membrane), and thus conserves the redox energy in a proton gradient. This Francisella tularensis subsp. mediasiatica (strain FSC147) protein is NADH-quinone oxidoreductase subunit D.